A 453-amino-acid polypeptide reads, in one-letter code: UDP-glucose 6-dehydrogenase (453 aa).

NAD(+) is bound by residues 2–19 (RLCV…AACF), V11, T121, and E158. Residues 154-158 (EFLKE), K210, N214, 255-259 (FIYAG), and G263 each bind substrate. The active-site Nucleophile is the C266. K269 contributes to the NAD(+) binding site. K327 provides a ligand contact to substrate. An NAD(+)-binding site is contributed by R334.

It belongs to the UDP-glucose/GDP-mannose dehydrogenase family.

It catalyses the reaction UDP-alpha-D-glucose + 2 NAD(+) + H2O = UDP-alpha-D-glucuronate + 2 NADH + 3 H(+). Its pathway is nucleotide-sugar biosynthesis; UDP-alpha-D-glucuronate biosynthesis; UDP-alpha-D-glucuronate from UDP-alpha-D-glucose: step 1/1. The protein operates within bacterial outer membrane biogenesis; lipopolysaccharide biosynthesis. The sequence is that of UDP-glucose 6-dehydrogenase (udg) from Pseudomonas aeruginosa (strain ATCC 15692 / DSM 22644 / CIP 104116 / JCM 14847 / LMG 12228 / 1C / PRS 101 / PAO1).